The primary structure comprises 408 residues: 3-ketoacyl-CoA thiolase A, peroxisomal (408 aa).

The active-site Acyl-thioester intermediate is Cys-112. Residues His-366 and Cys-394 each act as proton acceptor in the active site.

The protein belongs to the thiolase-like superfamily. Thiolase family. Homodimer.

The protein localises to the peroxisome. It catalyses the reaction an acyl-CoA + acetyl-CoA = a 3-oxoacyl-CoA + CoA. Its pathway is lipid metabolism; fatty acid metabolism. The polypeptide is 3-ketoacyl-CoA thiolase A, peroxisomal (Candida tropicalis (Yeast)).